A 352-amino-acid chain; its full sequence is Ribosomal lysine N-methyltransferase 5 (352 aa).

Residues Trp-107, 161-163 (GSG), Asp-183, Trp-244, and Leu-274 contribute to the S-adenosyl-L-methionine site.

Belongs to the class I-like SAM-binding methyltransferase superfamily. RKM5 family.

Functionally, S-adenosyl-L-methionine-dependent protein-lysine N-methyltransferase that methylates 60S ribosomal protein L1. This chain is Ribosomal lysine N-methyltransferase 5 (RKM5), found in Candida glabrata (strain ATCC 2001 / BCRC 20586 / JCM 3761 / NBRC 0622 / NRRL Y-65 / CBS 138) (Yeast).